A 707-amino-acid chain; its full sequence is DNA ligase (707 aa).

Positions 1 to 23 (MSSKATQDPEAVLAEQSDDATEA) are disordered. Residues 53–57 (DAEFD), 103–104 (SL), and Glu133 each bind NAD(+). Lys135 acts as the N6-AMP-lysine intermediate in catalysis. NAD(+) contacts are provided by Arg156, Glu196, Lys315, and Lys339. Cys433, Cys436, Cys452, and Cys458 together coordinate Zn(2+). Residues 622-707 (SIERTLDGLS…LENGPDTPDS (86 aa)) enclose the BRCT domain.

The protein belongs to the NAD-dependent DNA ligase family. LigA subfamily. Mg(2+) is required as a cofactor. Requires Mn(2+) as cofactor.

The catalysed reaction is NAD(+) + (deoxyribonucleotide)n-3'-hydroxyl + 5'-phospho-(deoxyribonucleotide)m = (deoxyribonucleotide)n+m + AMP + beta-nicotinamide D-nucleotide.. Its function is as follows. DNA ligase that catalyzes the formation of phosphodiester linkages between 5'-phosphoryl and 3'-hydroxyl groups in double-stranded DNA using NAD as a coenzyme and as the energy source for the reaction. It is essential for DNA replication and repair of damaged DNA. The sequence is that of DNA ligase from Mycolicibacterium vanbaalenii (strain DSM 7251 / JCM 13017 / BCRC 16820 / KCTC 9966 / NRRL B-24157 / PYR-1) (Mycobacterium vanbaalenii).